Here is a 200-residue protein sequence, read N- to C-terminus: dTTP/UTP pyrophosphatase (200 aa).

Aspartate 72 acts as the Proton acceptor in catalysis.

The protein belongs to the Maf family. YhdE subfamily. The cofactor is a divalent metal cation.

Its subcellular location is the cytoplasm. It catalyses the reaction dTTP + H2O = dTMP + diphosphate + H(+). The catalysed reaction is UTP + H2O = UMP + diphosphate + H(+). Its function is as follows. Nucleoside triphosphate pyrophosphatase that hydrolyzes dTTP and UTP. May have a dual role in cell division arrest and in preventing the incorporation of modified nucleotides into cellular nucleic acids. The chain is dTTP/UTP pyrophosphatase from Pseudomonas syringae pv. syringae (strain B728a).